The chain runs to 189 residues: Lipid A acyltransferase PagP (189 aa).

A signal peptide spans 1-23 (MKLKSVLYLLMLLNCLGLKSAHA). Active-site residues include H61, D104, and S105.

This sequence belongs to the lipid A palmitoyltransferase family. In terms of assembly, homodimer.

The protein localises to the cell outer membrane. The enzyme catalyses a lipid A + a 1,2-diacyl-sn-glycero-3-phosphocholine = a hepta-acyl lipid A + a 2-acyl-sn-glycero-3-phosphocholine. The catalysed reaction is a lipid IVA + a 1,2-diacyl-sn-glycero-3-phosphocholine = a lipid IVB + a 2-acyl-sn-glycero-3-phosphocholine. It carries out the reaction a lipid IIA + a 1,2-diacyl-sn-glycero-3-phosphocholine = a lipid IIB + a 2-acyl-sn-glycero-3-phosphocholine. Transfers a fatty acid residue from the sn-1 position of a phospholipid to the N-linked hydroxyfatty acid chain on the proximal unit of lipid A or its precursors. In Erwinia amylovora (strain ATCC 49946 / CCPPB 0273 / Ea273 / 27-3), this protein is Lipid A acyltransferase PagP.